The chain runs to 183 residues: Ras-related protein Rap-2a (183 aa).

GTP is bound at residue 10 to 17 (GSGGVGKS). The short motif at 32–40 (YDPTIEDFY) is the Effector region element. A glycan ((Microbial infection) O-linked (Glc) threonine; by C.difficile toxin TcdA, and by P.sordellii toxin TcsL) is linked at T35. GTP is bound by residues 57–61 (DTAGT) and 116–119 (NKVD). 2 S-palmitoyl cysteine lipidation sites follow: C176 and C177. C180 carries the cysteine methyl ester modification. Residue C180 is the site of S-farnesyl cysteine attachment. A propeptide spans 181–183 (NIQ) (removed in mature form).

Belongs to the small GTPase superfamily. Ras family. Interacts (GTP-bound form) with RUNDC3A. Interacts with RGS14; the interaction is GTP-dependent. Interacts with PLCE1. Interacts with ARHGAP29, SGSM1, SGSM2 and SGSM3. Interacts (GTP-bound form preferentially) with TNIK (via the CNH domain); the interaction is direct and recruits RAP2A to the E3 ubiquitin ligase NEDD4. Interacts with MINK1. Interacts (GTP-bound form preferentially) with MAP4K4. Interacts with cytoskeletal actin. In terms of processing, ubiquitinated; undergoes 'Lys-63' monoubiquitination and diubiquitination by NEDD4. Multiple lysine residues are probably modified. Ubiquitination requires TNIK, prevents interaction with effectors and inactivates RAP2A. Ubiquitination by the ECS(RAB40B) complex leads to RAP2A localization to lamellipodia plasma membrane, activation, and regulation of sorting at early endosomes for recycling to the lamellipodia plasma membrane. Post-translationally, palmitoylated. Palmitoylation is required for association with recycling endosome membranes and activation of TNIK. (Microbial infection) Glucosylated at Thr-35 by C.difficile toxin TcdA in the colonic epithelium, and by P.sordellii toxin TcsL in the vascular endothelium.

It is found in the midbody. It localises to the cell projection. Its subcellular location is the lamellipodium membrane. The protein localises to the golgi apparatus. The protein resides in the recycling endosome membrane. It is found in the lysosome. It carries out the reaction GTP + H2O = GDP + phosphate + H(+). With respect to regulation, activated by the guanine nucleotide-exchange factors RAPGEF3 and RAPGEF4 in a cAMP-dependent manner. Nucleotide exchange is also specifically stimulated by RAPGEF5, RASGEF1A and RASGEF1B. Functionally, small GTP-binding protein which cycles between a GDP-bound inactive and a GTP-bound active form. In its active form interacts with and regulates several effectors including MAP4K4, MINK1 and TNIK. Part of a signaling complex composed of NEDD4, RAP2A and TNIK which regulates neuronal dendrite extension and arborization during development. More generally, it is part of several signaling cascades and regulates cytoskeletal rearrangements, cell migration, cell adhesion and cell spreading. This chain is Ras-related protein Rap-2a, found in Homo sapiens (Human).